Consider the following 148-residue polypeptide: SsrA-binding protein (148 aa).

It belongs to the SmpB family.

The protein localises to the cytoplasm. Its function is as follows. Required for rescue of stalled ribosomes mediated by trans-translation. Binds to transfer-messenger RNA (tmRNA), required for stable association of tmRNA with ribosomes. tmRNA and SmpB together mimic tRNA shape, replacing the anticodon stem-loop with SmpB. tmRNA is encoded by the ssrA gene; the 2 termini fold to resemble tRNA(Ala) and it encodes a 'tag peptide', a short internal open reading frame. During trans-translation Ala-aminoacylated tmRNA acts like a tRNA, entering the A-site of stalled ribosomes, displacing the stalled mRNA. The ribosome then switches to translate the ORF on the tmRNA; the nascent peptide is terminated with the 'tag peptide' encoded by the tmRNA and targeted for degradation. The ribosome is freed to recommence translation, which seems to be the essential function of trans-translation. The chain is SsrA-binding protein from Burkholderia ambifaria (strain ATCC BAA-244 / DSM 16087 / CCUG 44356 / LMG 19182 / AMMD) (Burkholderia cepacia (strain AMMD)).